Consider the following 811-residue polypeptide: tRNA(Met) cytidine acetyltransferase TmcA (811 aa).

2 residues coordinate ATP: Q267 and R439. The region spanning 473 to 662 (KKEVYLEEPD…GEFTAIVLKP (190 aa)) is the N-acetyltransferase domain. Acetyl-CoA-binding positions include 589–591 (IAT), E629, and R636.

The protein belongs to the TmcA family.

It is found in the cytoplasm. It catalyses the reaction cytidine(34) in elongator tRNA(Met) + acetyl-CoA + ATP + H2O = N(4)-acetylcytidine(34) in elongator tRNA(Met) + ADP + phosphate + CoA + H(+). It carries out the reaction a cytidine in RNA + acetyl-CoA + ATP + H2O = an N(4)-acetylcytidine in RNA + ADP + phosphate + CoA + H(+). The catalysed reaction is a cytidine in tRNA + acetyl-CoA + ATP + H2O = an N(4)-acetylcytidine in tRNA + ADP + phosphate + CoA + H(+). The enzyme catalyses a cytidine in mRNA + acetyl-CoA + ATP + H2O = an N(4)-acetylcytidine in mRNA + ADP + phosphate + CoA + H(+). In terms of biological role, catalyzes the formation of N(4)-acetylcytidine (ac(4)C) at the wobble position of tRNA(Met), by using acetyl-CoA as an acetyl donor and ATP (or GTP). Catalyzes the formation of 267 N(4)-acetylcytidine (ac(4)C) sites in RNA, almost always on the middle C of a CCG motif. Modifications are found in rRNA, ncRNA, mRNA and tRNA. More acetylation is observed at 95 than at 75 or 85 degrees Celsius. This Thermococcus sp. (strain AM4) protein is tRNA(Met) cytidine acetyltransferase TmcA.